A 103-amino-acid polypeptide reads, in one-letter code: Truncated secreted TNF-receptor-like protein A53R (103 aa).

One copy of the TNFR-Cys 1 repeat lies at 36 to 73 (SCDKGEYLDKRHNQCCNRCPPGEFAKVRCNGNDNTKCE). Cystine bridges form between cysteine 37–cysteine 50, cysteine 51–cysteine 64, and cysteine 54–cysteine 72. The stretch at 74–103 (RCPPHTYTTIPIILMDVINVENAQPDHLIR) is one TNFR-Cys 2; truncated repeat.

This sequence belongs to the poxviridae A53R protein family.

The chain is Truncated secreted TNF-receptor-like protein A53R from Vaccinia virus (strain Western Reserve) (VACV).